We begin with the raw amino-acid sequence, 375 residues long: Transcription factor E2F4 (375 aa).

A DNA-binding region spans residues 12–81; sequence SRHEKSLGLL…KNSIQWKGVG (70 aa). A leucine-zipper region spans residues 39 to 61; the sequence is LKAAADTLAVRQKRRIYDITNVL. Residues 44–81 carry the DEF box motif; sequence DTLAVRQKRRIYDITNVLEGIGLIEKKSKNSIQWKGVG. Positions 82-177 are dimerization; it reads PGCNTREIAD…NTNGQKKFQI (96 aa). The tract at residues 197–300 is disordered; the sequence is SSAPVVVPVP…PDPSTSFQPI (104 aa). The segment covering 220–270 has biased composition (polar residues); it reads STPQRPALTPQNDIATSPAPTVPHSTISNAESQDCPTGQTFSMENTTSSRL. Residues 280-296 show a composition bias toward low complexity; that stretch reads SSASLDNSNDSPDPSTS. A transactivation region spans residues 299 to 375; that stretch reads PIKSDLSDVL…CDLFDVPINL (77 aa).

The protein belongs to the E2F/DP family. Component of the drtf1/e2f transcription factor complex. Component of the EDM complex, at least composed of e2f4, e2f5, mcidas and tfdp1.

It localises to the nucleus. Functionally, transcription activator that binds DNA cooperatively with DP proteins through the E2 recognition site, 5'-TTTC[CG]CGC-3' found in the promoter region of a number of genes. Component of the EDM complex, a complex specifically required for multiciliate cell differentiation: the EDM complex binds and activate genes required for centriole biogenesis. Activates genes required for centriole assembly (plk4, cep152) and genes specifically required for motile cilia formation (foxj1). Also promotes the deuterosome pathway of centriole biogenesis by activating expression of deup1, but not its paralog cep63. This is Transcription factor E2F4 from Xenopus laevis (African clawed frog).